The primary structure comprises 425 residues: Formyl-CoA:oxalate CoA-transferase (425 aa).

Residues 17 to 18 (QS), Arg-38, 72 to 75 (LDTK), 96 to 98 (NFG), Arg-104, and 136 to 139 (KVYE) contribute to the CoA site. Asp-168 acts as the Nucleophile in catalysis. 247-249 (GGQ) is a substrate binding site.

Belongs to the CoA-transferase III family. Frc subfamily. Homodimer.

It catalyses the reaction formyl-CoA + oxalate = oxalyl-CoA + formate. The protein operates within metabolic intermediate degradation; oxalate degradation; CO(2) and formate from oxalate: step 1/2. Functionally, involved in the catabolism of oxalate and in the adapatation to low pH via the induction of the oxalate-dependent acid tolerance response (ATR). Catalyzes the transfer of the CoA moiety from formyl-CoA to oxalate. The polypeptide is Formyl-CoA:oxalate CoA-transferase (Rhodopseudomonas palustris (strain BisA53)).